The sequence spans 393 residues: Acetate kinase (393 aa).

N7 is a Mg(2+) binding site. Residue K14 participates in ATP binding. Residue R90 participates in substrate binding. D147 serves as the catalytic Proton donor/acceptor. ATP contacts are provided by residues 205–209 (HLGNG), 280–282 (DFR), and 328–332 (GIGEN). E380 is a binding site for Mg(2+).

It belongs to the acetokinase family. In terms of assembly, homodimer. It depends on Mg(2+) as a cofactor. Requires Mn(2+) as cofactor.

It is found in the cytoplasm. The enzyme catalyses acetate + ATP = acetyl phosphate + ADP. Its pathway is metabolic intermediate biosynthesis; acetyl-CoA biosynthesis; acetyl-CoA from acetate: step 1/2. Catalyzes the formation of acetyl phosphate from acetate and ATP. Can also catalyze the reverse reaction. The sequence is that of Acetate kinase from Finegoldia magna (strain ATCC 29328 / DSM 20472 / WAL 2508) (Peptostreptococcus magnus).